The following is a 97-amino-acid chain: Large ribosomal subunit protein bL21 (97 aa).

It belongs to the bacterial ribosomal protein bL21 family. As to quaternary structure, part of the 50S ribosomal subunit. Contacts protein L20.

This protein binds to 23S rRNA in the presence of protein L20. The polypeptide is Large ribosomal subunit protein bL21 (Persephonella marina (strain DSM 14350 / EX-H1)).